Reading from the N-terminus, the 484-residue chain is Probable glycine dehydrogenase (decarboxylating) subunit 2 (484 aa).

Position 264 is an N6-(pyridoxal phosphate)lysine (K264).

The protein belongs to the GcvP family. C-terminal subunit subfamily. The glycine cleavage system is composed of four proteins: P, T, L and H. In this organism, the P 'protein' is a heterodimer of two subunits. It depends on pyridoxal 5'-phosphate as a cofactor.

The catalysed reaction is N(6)-[(R)-lipoyl]-L-lysyl-[glycine-cleavage complex H protein] + glycine + H(+) = N(6)-[(R)-S(8)-aminomethyldihydrolipoyl]-L-lysyl-[glycine-cleavage complex H protein] + CO2. Functionally, the glycine cleavage system catalyzes the degradation of glycine. The P protein binds the alpha-amino group of glycine through its pyridoxal phosphate cofactor; CO(2) is released and the remaining methylamine moiety is then transferred to the lipoamide cofactor of the H protein. This Legionella pneumophila (strain Paris) protein is Probable glycine dehydrogenase (decarboxylating) subunit 2.